The chain runs to 284 residues: Tropomyosin (284 aa).

Residues 1-284 (MEAIKNKMQA…DQTFAELTGY (284 aa)) adopt a coiled-coil conformation. Positions 22–43 (AEIAEQKSRDANLRAEKSEEEV) are disordered.

This sequence belongs to the tropomyosin family. As to quaternary structure, homodimer.

In terms of biological role, tropomyosin, in association with the troponin complex, plays a central role in the calcium dependent regulation of muscle contraction. In Lepidoglyphus destructor (Storage mite), this protein is Tropomyosin.